A 148-amino-acid chain; its full sequence is Aspartate carbamoyltransferase regulatory chain (148 aa).

Zn(2+) is bound by residues cysteine 106, cysteine 111, cysteine 134, and cysteine 137.

Belongs to the PyrI family. Contains catalytic and regulatory chains. Zn(2+) serves as cofactor.

Involved in allosteric regulation of aspartate carbamoyltransferase. This chain is Aspartate carbamoyltransferase regulatory chain, found in Methanococcus maripaludis (strain C7 / ATCC BAA-1331).